The sequence spans 373 residues: MTGSPRAPHQEHALGEPTVEGLARYIREKDVRRILVLVGAGASVAAGIPDFRSSDTGIYAKLGKYNLDDPTDAFSLTLLREKPEIFYSIARELNLWPGHFQPTAVHHFIRLLQDEGRLLRCCTQNIDGLEKAAGVSPELLVEAHGSFAAAACIECHTPFSIEQNYLEAMSGTVSRCSTCGGIVKPNVVFFGENLPDAFFDALHHDAPIAELVIIIGTSMQVHPFALLPCVVPKSIPRVLMNRERVGGLLFRFPDDPLDTIHDDAVAKEGRSSSSQSRSPSASARREEGGTEDGSSSPNEEVEDASTSSSSDGYGQYGDYYAHPDVCRDVFFRGDCQENVLKLAECLGLREALAKRMRFSGAAPATARKTSNET.

The region spanning 12 to 349 is the Deacetylase sirtuin-type domain; it reads HALGEPTVEG…LKLAECLGLR (338 aa). NAD(+) contacts are provided by residues 39–59 and 124–127; these read GAGASVAAGIPDFRSSDTGIY and QNID. His-144 acts as the Proton acceptor in catalysis. Zn(2+)-binding residues include Cys-152, Cys-155, Cys-176, and Cys-179. Residues 216–218 and 241–243 each bind NAD(+); these read GTS and NRE. The interval 263–313 is disordered; sequence DAVAKEGRSSSSQSRSPSASARREEGGTEDGSSSPNEEVEDASTSSSSDGY. A compositionally biased stretch (low complexity) spans 271-282; it reads SSSSQSRSPSAS. Cys-335 contributes to the NAD(+) binding site.

It belongs to the sirtuin family. Class I subfamily. Zn(2+) is required as a cofactor.

It localises to the nucleus. It carries out the reaction N(6)-acetyl-L-lysyl-[protein] + NAD(+) + H2O = 2''-O-acetyl-ADP-D-ribose + nicotinamide + L-lysyl-[protein]. Functionally, NAD-dependent deacetylase, which probably acts as a regulator of gene expression believed to help form modified chromatin structures on the genes it regulates. The chain is NAD-dependent protein deacetylase SIR2rp1 (SIR2rp1) from Leishmania major.